We begin with the raw amino-acid sequence, 177 residues long: NAD(P)H-quinone oxidoreductase subunit 6, chloroplastic (177 aa).

The next 5 membrane-spanning stretches (helical) occupy residues 10–30 (VLLV…VLLT), 32–52 (PIYS…FYIL), 61–81 (AQLL…VMFM), 90–112 (FYLW…FSLI), and 152–172 (FYLP…GAIT).

The protein belongs to the complex I subunit 6 family. NDH is composed of at least 16 different subunits, 5 of which are encoded in the nucleus.

It is found in the plastid. The protein resides in the chloroplast thylakoid membrane. It catalyses the reaction a plastoquinone + NADH + (n+1) H(+)(in) = a plastoquinol + NAD(+) + n H(+)(out). The enzyme catalyses a plastoquinone + NADPH + (n+1) H(+)(in) = a plastoquinol + NADP(+) + n H(+)(out). Its function is as follows. NDH shuttles electrons from NAD(P)H:plastoquinone, via FMN and iron-sulfur (Fe-S) centers, to quinones in the photosynthetic chain and possibly in a chloroplast respiratory chain. The immediate electron acceptor for the enzyme in this species is believed to be plastoquinone. Couples the redox reaction to proton translocation, and thus conserves the redox energy in a proton gradient. This is NAD(P)H-quinone oxidoreductase subunit 6, chloroplastic (ndhG) from Acorus calamus var. americanus (American sweet flag).